A 251-amino-acid polypeptide reads, in one-letter code: Pyrroloquinoline-quinone synthase (251 aa).

Belongs to the PqqC family.

It catalyses the reaction 6-(2-amino-2-carboxyethyl)-7,8-dioxo-1,2,3,4,7,8-hexahydroquinoline-2,4-dicarboxylate + 3 O2 = pyrroloquinoline quinone + 2 H2O2 + 2 H2O + H(+). It functions in the pathway cofactor biosynthesis; pyrroloquinoline quinone biosynthesis. Ring cyclization and eight-electron oxidation of 3a-(2-amino-2-carboxyethyl)-4,5-dioxo-4,5,6,7,8,9-hexahydroquinoline-7,9-dicarboxylic-acid to PQQ. The chain is Pyrroloquinoline-quinone synthase from Pseudomonas putida (strain W619).